A 1357-amino-acid polypeptide reads, in one-letter code: MAYSYTEKKRIRKDFSKLPDVMDVPYLLAIQLDSYREFLQAGATKEQFRDVGLHAAFKSVFPIISYSGNAALEYVGYRLGEPAFDVKECVLRGVTFAVPLRVKVRLIIFDRESSNKAIKDIKEQEVYMGEIPLMTENGTFIINGTERVIVSQLHRSPGVFFDHDRGKTHSSGKLLYSARIIPYRGSWLDFEFDPKDCVFVRIDRRRKLPASVLLRALGYSTEEILNAFYATNVFHIKGETLNLELVPQRLRGEVASIDIKDGSGKVIVEQGRRITARHINQLEKAGVSQLEVPFDYLIGRTIAKAIVHPATGEIIAECNTELTLDLLAKVAKAQVVRIETLYTNDIDCGPFISDTLKIDNTSNQLEALVEIYRMMRPGEPPTKEAAETLFGNLFFSAERYDLSAVGRMKFNRRIGRTEIEGPGVLSKEDIIDVLKTLVDIRNGKGIVDDIDHLGNRRVRCVGEMAENQFRVGLVRVERAVKERLSMAESEGLMPQDLINAKPVAAAIKEFFGSSQLSQFMDQNNPLSEITHKRRVSALGPGGLTRERAGFEVRDVHPTHYGRVCPIETPEGPNIGLINSLATYARTNKYGFLESPYRVVKDSLVTDEIVFLSAIEEADHVIAQASATLNEKGQLVDELVAVRHLNEFTVKAPEDVTLMDVSPKQVVSVAASLIPFLEHDDANRALMGSNMQRQAVPTLRADKPLVGTGMERNVARDSGVCVVARRGGVIDSVDASRVVVRVADDEVETGEAGVDIYNLTKYTRSNQNTCINQRPLVSKGDVVARGDILADGPSTDMGELALGQNMRVAFMPWNGFNFEDSICLSERVVQEDRFTTIHIQELTCVARDTKLGPEEITADIPNVGEAALNKLDEAGIVYVGAEVQAGDILVGKVTPKGETQLTPEEKLLRAIFGEKASDVKDTSLRVPTGTKGTVIDVQVFTRDGVERDSRALSIEKMQLDQIRKDLNEEFRIVEGATFERLRAALVGAKAEGGPALKKGTEITDDYLDGLERGQWFKLRMADDALNEQLEKAQAYISDRRQLLDDKFEDKKRKLQQGDDLAPGVLKIVKVYLAIKRRIQPGDKMAGRHGNKGVVSVIMPVEDMPHDANGTPVDIVLNPLGVPSRMNVGQILETHLGLAAKGLGEKINRMLEEQRKVAELRKFLHEIYNEIGGREENLDELGDNEILALAKNLRGGVPMATPVFDGAKEREIKAMLKLADLPESGQMRLFDGRTGNQFERPTTVGYMYMLKLNHLVDDKMHARSTGSYSLVTQQPLGGKAQFGGQRFGEMEVWALEAYGAAYTLQEMLTVKSDDVNGRTKMYKNIVDGDHRMEAGMPESFNVLIKEIRSLGIDIELETE.

It belongs to the RNA polymerase beta chain family. In terms of assembly, the RNAP catalytic core consists of 2 alpha, 1 beta, 1 beta' and 1 omega subunit. When a sigma factor is associated with the core the holoenzyme is formed, which can initiate transcription.

It catalyses the reaction RNA(n) + a ribonucleoside 5'-triphosphate = RNA(n+1) + diphosphate. DNA-dependent RNA polymerase catalyzes the transcription of DNA into RNA using the four ribonucleoside triphosphates as substrates. The protein is DNA-directed RNA polymerase subunit beta of Pseudomonas aeruginosa (strain ATCC 15692 / DSM 22644 / CIP 104116 / JCM 14847 / LMG 12228 / 1C / PRS 101 / PAO1).